The sequence spans 112 residues: Nucleoid-associated protein FTN_1196 (112 aa).

A disordered region spans residues 1 to 27 (MNFDMSKLMQQAQKMQEQMKKAQQERE). Over residues 17-27 (EQMKKAQQERE) the composition is skewed to basic and acidic residues.

The protein belongs to the YbaB/EbfC family. As to quaternary structure, homodimer.

The protein resides in the cytoplasm. Its subcellular location is the nucleoid. Binds to DNA and alters its conformation. May be involved in regulation of gene expression, nucleoid organization and DNA protection. The sequence is that of Nucleoid-associated protein FTN_1196 from Francisella tularensis subsp. novicida (strain U112).